Consider the following 79-residue polypeptide: uncharacterized protein (79 aa).

Residues 53–73 (LFFAYMVAYIGFGILSIGMIV) form a helical membrane-spanning segment.

It is found in the membrane. This is an uncharacterized protein from Escherichia coli O157:H7.